Here is a 620-residue protein sequence, read N- to C-terminus: E3 ubiquitin-protein ligase DTX1 (620 aa).

2 consecutive WWE domains span residues 14–94 (GLGF…PVRR) and 95–171 (NFYD…RLRR). Disordered stretches follow at residues 221–248 (SQRRKAPPAPPLPPPPPPGGPPGALAVR), 262–313 (PAAG…SIPP), and 361–391 (PPVSKSDVKPVPGVPGVCRKTKKKHLKKSKN). 2 stretches are compositionally biased toward pro residues: residues 227-241 (PPAPPLPPPPPPGGP) and 268-280 (EPAPPPGAPPRSP). Residues 230-233 (PPLP) carry the SH3-binding motif. Polar residues predominate over residues 291 to 307 (QNNLNRPGPQRTTSVSA). Positions 379–389 (RKTKKKHLKKS) are enriched in basic residues. The segment at 411–472 (CTICMERLVT…DGSLQCPTCK (62 aa)) adopts an RING-type zinc-finger fold.

It belongs to the Deltex family. As to quaternary structure, homodimer. May form a heterodimer with other members of the Deltex family. Interacts with NOTCH1 via its N-terminal region and EIF3F, the interaction is required for NOTCH1 deubiquitination. Interacts with EP300. Forms a heterodimer with BBAP; the heterodimerization leading to an increase of in vitro ubiquitin ligase activity. Interacts with ITCH. In terms of processing, ubiquitinated; undergoes 'Lys-29'-linked polyubiquitination catalyzed by ITCH. In terms of tissue distribution, widely expressed. Strongly expressed in blood vessel. Also expressed in embryonic nervous system, pancreas, lung, adrenal gland, digestive tube and muscles. Expressed in MZB cells and developing B- and T-cells.

Its subcellular location is the cytoplasm. The protein resides in the nucleus. The catalysed reaction is S-ubiquitinyl-[E2 ubiquitin-conjugating enzyme]-L-cysteine + [acceptor protein]-L-lysine = [E2 ubiquitin-conjugating enzyme]-L-cysteine + N(6)-ubiquitinyl-[acceptor protein]-L-lysine.. It participates in protein modification; protein ubiquitination. Functionally, functions as a ubiquitin ligase protein in vivo, mediating ubiquitination and promoting degradation of MEKK1, suggesting that it may regulate the Notch pathway via some ubiquitin ligase activity. Regulator of Notch signaling, a signaling pathway involved in cell-cell communications that regulates a broad spectrum of cell-fate determinations. Mainly acts as a positive regulator of Notch, but it also acts as a negative regulator, depending on the developmental and cell context. Mediates the antineural activity of Notch, possibly by inhibiting the transcriptional activation mediated by MATCH1. Involved in neurogenesis, lymphogenesis and myogenesis, and may also be involved in MZB (Marginal zone B) cell differentiation. Promotes B-cell development at the expense of T-cell development, suggesting that it can antagonize NOTCH1. This Homo sapiens (Human) protein is E3 ubiquitin-protein ligase DTX1 (DTX1).